Here is a 393-residue protein sequence, read N- to C-terminus: FAD-dependent monooxygenase dbaB (393 aa).

An N-terminal signal peptide occupies residues 1-23; sequence MTRTSPTLPVIILGAGMVGLTLA. 2 residues coordinate FAD: Glu-37 and Arg-107. A glycan (N-linked (GlcNAc...) asparagine) is linked at Asn-128. Tyr-221 is a catalytic residue. Asn-233 is a glycosylation site (N-linked (GlcNAc...) asparagine). FAD is bound at residue Asp-320.

The protein belongs to the paxM FAD-dependent monooxygenase family. It depends on FAD as a cofactor.

It participates in secondary metabolite biosynthesis. Its function is as follows. FAD-dependent monooxygenase; part of the gene cluster that mediates the biosynthesis of the antibiotic 2,4-dihydroxy-3-methyl-6-(2-oxopropyl)benzaldehyde (DHMBA) and its derivatives. The direct non-reducing polyketide synthase dbaI product is 2,4-dihydroxy-3-methyl-6-(2-oxopropyl)benzaldehyde (DHMBA), produced by condensation of one acetyl-CoA starter unit with 4 malonyl-CoA units and one methylation step. The FAD-dependent monooxygenase dbaH is responsible for the synthesis of yellow pigments derived from the oxidation of DHMBA. The roles of dbaB, C, E and F have still to be determined. This is FAD-dependent monooxygenase dbaB from Emericella nidulans (strain FGSC A4 / ATCC 38163 / CBS 112.46 / NRRL 194 / M139) (Aspergillus nidulans).